Consider the following 68-residue polypeptide: MKLQLMICLVLLPCFFCEPDEICRARMTNKEFTYKSNVCNGCGDQVAACEAECFRNDVYTACHEAQKG.

A signal peptide spans 1 to 17 (MKLQLMICLVLLPCFFC). 3 disulfide bridges follow: Cys-23/Cys-53, Cys-39/Cys-49, and Cys-42/Cys-62. Lys-67 carries the post-translational modification Lysine amide.

The protein belongs to the helical arthropod-neuropeptide-derived (HAND) family. Expressed by the venom gland.

It is found in the secreted. Toxin that paralyzes insects. May have a direct effect on the insect central nervous system. The sequence is that of U1-agatoxin-Ta1c from Eratigena agrestis (Hobo spider).